The chain runs to 250 residues: Small ribosomal subunit protein uS3 (250 aa).

Residues 39 to 107 (VREFLTKKLK…PAQVSINEID (69 aa)) enclose the KH type-2 domain. The tract at residues 214-250 (VMNPAPQEERPAKRGRGRGEGQERRGRRSDRAADKGE) is disordered. The span at 220–250 (QEERPAKRGRGRGEGQERRGRRSDRAADKGE) shows a compositional bias: basic and acidic residues.

The protein belongs to the universal ribosomal protein uS3 family. In terms of assembly, part of the 30S ribosomal subunit. Forms a tight complex with proteins S10 and S14.

Functionally, binds the lower part of the 30S subunit head. Binds mRNA in the 70S ribosome, positioning it for translation. The chain is Small ribosomal subunit protein uS3 from Acinetobacter baylyi (strain ATCC 33305 / BD413 / ADP1).